The following is a 311-amino-acid chain: Coproporphyrin III ferrochelatase 1 (311 aa).

Fe-coproporphyrin III-binding positions include tyrosine 12, arginine 29, 45–46, serine 53, and tyrosine 124; that span reads RY. Fe(2+) is bound by residues histidine 182 and glutamate 263.

The protein belongs to the ferrochelatase family.

It localises to the cytoplasm. The enzyme catalyses Fe-coproporphyrin III + 2 H(+) = coproporphyrin III + Fe(2+). It participates in porphyrin-containing compound metabolism; protoheme biosynthesis. In terms of biological role, involved in coproporphyrin-dependent heme b biosynthesis. Catalyzes the insertion of ferrous iron into coproporphyrin III to form Fe-coproporphyrin III. This is Coproporphyrin III ferrochelatase 1 from Bacillus cereus (strain ATCC 10987 / NRS 248).